We begin with the raw amino-acid sequence, 345 residues long: Metal-dependent phosphohydrolase cns2 (345 aa).

Residues 70 to 171 enclose the HD domain; sequence RLEHSVGAFI…QLCADRLDYA (102 aa).

In terms of assembly, interacts with cns1.

It localises to the lipid droplet. It participates in secondary metabolite biosynthesis. Functionally, metal-dependent phosphohydrolase; part of the gene cluster that mediates the biosynthesis of cordycepin (COR) and pentostatin (PTN), two adenosine analogs with related bioactivity profiles as both mimic adenosine and can inhibit some of the processes that are adenosine dependent. Within the pathway, cns2 catalyzes dephosphorylation of 3'-AMP to produce 2'-carbonyl-3'-deoxyadenosine (2'-C-3'-dA). The first step of cordycepin biosynthesis involves hydroxyl phosphorylation of the 3'-OH position on adenosine to produce adenosine-3'-monophosphate (3'-AMP), catalyzed by kinase activity of cns3. Next, 3'-AMP is dephosphorylated to 2'-carbonyl-3'-deoxyadenosine by cns2, which is finally converted to cordycepin (3'-deoxyadenosine) by the oxidoreductase cns1. This Cordyceps militaris (strain CM01) (Caterpillar fungus) protein is Metal-dependent phosphohydrolase cns2.